We begin with the raw amino-acid sequence, 132 residues long: Agouti-signaling protein (132 aa).

The N-terminal stretch at 1–22 is a signal peptide; it reads MDVTRLLLATLLVFLCFFTVYS. Residue asparagine 39 is glycosylated (N-linked (GlcNAc...) asparagine). The segment at 62–93 is disordered; that stretch reads ISRKEAEKKRSSKKEASMKKVAQPRTPLSAPC. A compositionally biased stretch (basic and acidic residues) spans 63–79; the sequence is SRKEAEKKRSSKKEASM. 5 disulfides stabilise this stretch: cysteine 93-cysteine 108, cysteine 100-cysteine 114, cysteine 107-cysteine 125, cysteine 111-cysteine 132, and cysteine 116-cysteine 123. The Agouti domain maps to 93-132; sequence CVATRDSCKPPAPACCDPCASCQCRFFRSACSCRVLSLNC.

The protein localises to the secreted. Functionally, involved in the regulation of melanogenesis. The binding of ASP to MC1R precludes alpha-MSH initiated signaling and thus blocks production of cAMP, leading to a down-regulation of eumelanogenesis (brown/black pigment) and thus increasing synthesis of pheomelanin (yellow/red pigment). This Trachypithecus auratus (Javan langur) protein is Agouti-signaling protein (ASIP).